Reading from the N-terminus, the 446-residue chain is Tetratricopeptide repeat protein 23 (446 aa).

5 TPR repeats span residues 45-78, 137-170, 186-219, 310-347, and 356-389; these read LRLS…TRIC, VELF…SKEM, ARIK…TEIS, TAKF…KVAV, and AETY…QTLL. A disordered region spans residues 410 to 446; it reads APEVPARPRPSPGAKAAFCAGGRPYSVPGRTRPSAAD.

In terms of assembly, associated with the EvC complex composed of EFCAB7, IQCE, EVC2 and EVC.

It is found in the cell projection. The protein localises to the cilium. Participates positively in the ciliary Hedgehog (Hh) signaling. In Bos taurus (Bovine), this protein is Tetratricopeptide repeat protein 23 (TTC23).